Here is a 273-residue protein sequence, read N- to C-terminus: Putative methyltransferase Cher3 (273 aa).

A CheR-type methyltransferase domain is found at 1–273; that stretch reads MTSERNTDIE…VKPQRIFRKS (273 aa). Residues Ser76, Arg80, Glu114, Asp137, 199 to 200, and 215 to 216 each bind S-adenosyl-L-methionine; these read SL and RN.

The sequence is that of Putative methyltransferase Cher3 (cheR3) from Pseudomonas putida (strain ATCC 47054 / DSM 6125 / CFBP 8728 / NCIMB 11950 / KT2440).